A 417-amino-acid polypeptide reads, in one-letter code: Imidazolonepropionase (417 aa).

2 residues coordinate Fe(3+): His80 and His82. 2 residues coordinate Zn(2+): His80 and His82. 4-imidazolone-5-propanoate-binding residues include Arg89, Tyr152, and His187. Tyr152 is an N-formimidoyl-L-glutamate binding site. His252 is a Fe(3+) binding site. Zn(2+) is bound at residue His252. 4-imidazolone-5-propanoate is bound at residue Glu255. Residue Asp326 coordinates Fe(3+). Asp326 contributes to the Zn(2+) binding site. 2 residues coordinate N-formimidoyl-L-glutamate: Asn328 and Gly330. A 4-imidazolone-5-propanoate-binding site is contributed by Ser331.

The protein belongs to the metallo-dependent hydrolases superfamily. HutI family. Zn(2+) is required as a cofactor. Fe(3+) serves as cofactor.

The protein resides in the cytoplasm. The catalysed reaction is 4-imidazolone-5-propanoate + H2O = N-formimidoyl-L-glutamate. Its pathway is amino-acid degradation; L-histidine degradation into L-glutamate; N-formimidoyl-L-glutamate from L-histidine: step 3/3. Catalyzes the hydrolytic cleavage of the carbon-nitrogen bond in imidazolone-5-propanoate to yield N-formimidoyl-L-glutamate. It is the third step in the universal histidine degradation pathway. This is Imidazolonepropionase from Bacteroides thetaiotaomicron (strain ATCC 29148 / DSM 2079 / JCM 5827 / CCUG 10774 / NCTC 10582 / VPI-5482 / E50).